The chain runs to 253 residues: Anamorsin homolog (253 aa).

Residues 4–129 (FKGLQKSLYI…ETGSSARLSF (126 aa)) are N-terminal SAM-like domain. Positions 130 to 161 (AKKNSSTLNVWKISGDDDELIDEEDLLDEVDK) are linker. Residues Cys-172, Cys-181, Cys-184, and Cys-186 each coordinate [2Fe-2S] cluster. The segment at 172 to 186 (CSTTGKRKACKNCSC) is fe-S binding site A. 4 residues coordinate [4Fe-4S] cluster: Cys-214, Cys-217, Cys-225, and Cys-228. Short sequence motifs (cx2C motif) lie at residues 214–217 (CGNC) and 225–228 (CSSC). Positions 214–228 (CGNCYLGDAFRCSSC) are fe-S binding site B.

This sequence belongs to the anamorsin family. Monomer. [2Fe-2S] cluster is required as a cofactor. The cofactor is [4Fe-4S] cluster.

It localises to the cytoplasm. The protein localises to the mitochondrion intermembrane space. Component of the cytosolic iron-sulfur (Fe-S) protein assembly (CIA) machinery. Required for the maturation of extramitochondrial Fe-S proteins. Part of an electron transfer chain functioning in an early step of cytosolic Fe-S biogenesis, facilitating the de novo assembly of a [4Fe-4S] cluster on the cytosolic Fe-S scaffold complex. Electrons are transferred from NADPH via a FAD- and FMN-containing diflavin oxidoreductase. Together with the diflavin oxidoreductase, also required for the assembly of the diferric tyrosyl radical cofactor of ribonucleotide reductase (RNR), probably by providing electrons for reduction during radical cofactor maturation in the catalytic small subunit. This is Anamorsin homolog from Drosophila willistoni (Fruit fly).